A 231-amino-acid chain; its full sequence is Type 3 secretion system stator protein (231 aa).

In terms of assembly, the core secretion machinery of the T3SS is composed of approximately 20 different proteins, including cytoplasmic components, a base, an export apparatus and a needle. This subunit is part of the cytosolic complex. Interacts directly with Spa47/SctN (T3SS ATPase) and Spa33/SctQ (the major sorting platform component). Homodimer in solution.

It localises to the cytoplasm. Its function is as follows. Component of the type III secretion system (T3SS), also called injectisome, which is used to inject bacterial effector proteins into eukaryotic host cells. Acts as a regulator of the Spa47/SctN ATPase activity. It down-regulates the ATPase activity of the oligomeric Spa47/SctN, while it up-regulates the activity of the monomeric form. Important for translocation of MxiH/SctF, the major needle component. This Shigella flexneri protein is Type 3 secretion system stator protein.